The sequence spans 806 residues: Mitogen-activated protein kinase 7 (806 aa).

The disordered stretch occupies residues 1–23; sequence MAEPLKEEDGEDGSGEPPGRVKA. The residue at position 2 (A2) is an N-acetylalanine. Residues 2-77 form a required for cytoplasmic targeting region; sequence AEPLKEEDGE…VVSSARRRLT (76 aa). The Protein kinase domain occupies 55–347; sequence YEIIETIGNG…AAAALRHPFL (293 aa). ATP is bound by residues 61-69 and K84; that span reads IGNGAYGVV. The interval 78 to 139 is required for binding to MAP2K5; sequence GQQVAIKKIP…FRSVYVVLDL (62 aa). A necessary for oligomerization region spans residues 140 to 406; it reads MESDLHQIIH…QQIRFQPSLQ (267 aa). The Proton acceptor role is filled by D182. The TXY signature appears at 219–221; it reads TEY. Residues 407 to 806 are may not be required for kinase activity; required to stimulate MEF2C activity; the sequence is PVASEPVCPD…LSDLPDLQEP (400 aa). Disordered regions lie at residues 424–473 and 488–727; these read APSG…AISD and RSRL…PKGS. Residues 433–443 are compositionally biased toward pro residues; the sequence is SPPPALPPCSD. 3 stretches are compositionally biased toward basic and acidic residues: residues 502-519, 527-544, and 563-573; these read PEPRKPVTAQERQREREE, RAKEREKRRQERERKERG, and DNDRSLLERWT. The Nuclear localization signal signature appears at 505–539; sequence RKPVTAQERQREREEKRRRRQERAKEREKRRQERE. The segment covering 578 to 592 has biased composition (pro residues); the sequence is PPAPAPAPAPAPAPA. Residues 593–603 are compositionally biased toward low complexity; that stretch reads PSSAQPTSTPT. Positions 627–643 are enriched in pro residues; that stretch reads VCPPPGPVPQPAGPIPA. Residues 647 to 660 are compositionally biased toward polar residues; the sequence is TAPSTSLLASQSLV. A compositionally biased stretch (pro residues) spans 678 to 689; the sequence is PSGPPPPDPGLT. Polar residues predominate over residues 693–710; that stretch reads STSESPDVNLVTQQLSKS. Position 710 is a phosphoserine (S710). The residue at position 723 (T723) is a Phosphothreonine.

Belongs to the protein kinase superfamily. CMGC Ser/Thr protein kinase family. MAP kinase subfamily. Interacts with MAP2K5. Forms oligomers. Interacts with MEF2A, MEF2C and MEF2D; the interaction phosphorylates the MEF2s and enhances transcriptional activity of MEF2A, MEF2C but not MEF2D. Interacts with SGK1. Interacts with PML. Interacts (via N-terminal half) with HSP90AB1-CDC37 chaperone complex in resting cells; the interaction is MAP2K5-independent and prevents MAPK7 from ubiquitination and proteasomal degradation. Interacts with STUB1/CHIP; the interaction is enhanced in the presence of IGF1 or MAP2K5 and promotes STUB1/CHIP E3 ligase activity. Mg(2+) is required as a cofactor. Post-translationally, dually phosphorylated on Thr-219 and Tyr-221, which activates the enzyme. As to expression, detected in testis, brain, kidney, lung and heart. Detected in total embryo (at protein level).

Its subcellular location is the cytoplasm. The protein localises to the nucleus. It localises to the PML body. It carries out the reaction L-seryl-[protein] + ATP = O-phospho-L-seryl-[protein] + ADP + H(+). The enzyme catalyses L-threonyl-[protein] + ATP = O-phospho-L-threonyl-[protein] + ADP + H(+). Its activity is regulated as follows. Activated by tyrosine and threonine phosphorylation. Activated in response to hyperosmolarity, hydrogen peroxide, and epidermal growth factor (EGF). Plays a role in various cellular processes such as proliferation, differentiation and cell survival. The upstream activator of MAPK7 is the MAPK kinase MAP2K5. Upon activation, it translocates to the nucleus and phosphorylates various downstream targets including MEF2C. EGF activates MAPK7 through a Ras-independent and MAP2K5-dependent pathway. As part of the MAPK/ERK signaling pathway, acts as a negative regulator of apoptosis in cardiomyocytes via interaction with STUB1/CHIP and promotion of STUB1-mediated ubiquitination and degradation of ICER-type isoforms of CREM. May have a role in muscle cell differentiation. May be important for endothelial function and maintenance of blood vessel integrity. MAP2K5 and MAPK7 interact specifically with one another and not with MEK1/ERK1 or MEK2/ERK2 pathways. Phosphorylates SGK1 at Ser-78 and this is required for growth factor-induced cell cycle progression. Involved in the regulation of p53/TP53 by disrupting the PML-MDM2 interaction. The sequence is that of Mitogen-activated protein kinase 7 (Mapk7) from Mus musculus (Mouse).